The sequence spans 151 residues: Centrin-A (151 aa).

2 EF-hand domains span residues 80–115 (DVYA…LGEA) and 116–151 (RSDS…KKIY). The Ca(2+) site is built by Asp-93, Asp-95, Ser-97, Tyr-99, Asp-104, Asp-129, Asn-131, Asp-133, Lys-135, and Glu-140.

Belongs to the centrin family.

It is found in the cytoplasm. The protein localises to the cytoskeleton. The protein resides in the microtubule organizing center. Its subcellular location is the centrosome. It localises to the nucleus. Functionally, plays a fundamental role in microtubule-organizing center structure and function. The polypeptide is Centrin-A (cenA) (Dictyostelium discoideum (Social amoeba)).